The sequence spans 882 residues: Alanine--tRNA ligase (882 aa).

The Zn(2+) site is built by His-574, His-578, Cys-682, and His-686. The interval 853 to 882 (GGRGGGKGALAQGGGLDPRKAREALPGLLP) is disordered. A compositionally biased stretch (gly residues) spans 854-868 (GRGGGKGALAQGGGL).

The protein belongs to the class-II aminoacyl-tRNA synthetase family. Requires Zn(2+) as cofactor.

Its subcellular location is the cytoplasm. The enzyme catalyses tRNA(Ala) + L-alanine + ATP = L-alanyl-tRNA(Ala) + AMP + diphosphate. Catalyzes the attachment of alanine to tRNA(Ala) in a two-step reaction: alanine is first activated by ATP to form Ala-AMP and then transferred to the acceptor end of tRNA(Ala). Also edits incorrectly charged Ser-tRNA(Ala) and Gly-tRNA(Ala) via its editing domain. The chain is Alanine--tRNA ligase from Thermus thermophilus (strain ATCC 27634 / DSM 579 / HB8).